The chain runs to 158 residues: Transcription elongation factor GreA (158 aa).

Residues 3–75 (TEKTYPMTQE…TQLENMIRNA (73 aa)) are a coiled coil.

It belongs to the GreA/GreB family.

In terms of biological role, necessary for efficient RNA polymerase transcription elongation past template-encoded arresting sites. The arresting sites in DNA have the property of trapping a certain fraction of elongating RNA polymerases that pass through, resulting in locked ternary complexes. Cleavage of the nascent transcript by cleavage factors such as GreA or GreB allows the resumption of elongation from the new 3'terminus. GreA releases sequences of 2 to 3 nucleotides. The polypeptide is Transcription elongation factor GreA (Bacillus cytotoxicus (strain DSM 22905 / CIP 110041 / 391-98 / NVH 391-98)).